Consider the following 417-residue polypeptide: Peptidyl-Asp metalloendopeptidase (417 aa).

The N-terminal stretch at 1–25 (MLSRSIGKAAGGLVLGLSVAAAAHA) is a signal peptide. Position 327 (histidine 327) interacts with Zn(2+). Glutamate 328 is a catalytic residue. Zn(2+) contacts are provided by histidine 331 and histidine 337.

Belongs to the peptidase M72 family. Zn(2+) serves as cofactor.

The catalysed reaction is Cleavage of Xaa-|-Asp, Xaa-|-Glu and Xaa-|-cysteic acid bonds.. Its function is as follows. Metalloprotease, specifically cleaves on the N-terminal side of aspartyl, glutamyl and cysteic acid residues. This chain is Peptidyl-Asp metalloendopeptidase, found in Stenotrophomonas maltophilia (strain K279a).